A 150-amino-acid chain; its full sequence is Large ribosomal subunit protein bL9 (150 aa).

The protein belongs to the bacterial ribosomal protein bL9 family.

Functionally, binds to the 23S rRNA. This chain is Large ribosomal subunit protein bL9, found in Erwinia tasmaniensis (strain DSM 17950 / CFBP 7177 / CIP 109463 / NCPPB 4357 / Et1/99).